Consider the following 1088-residue polypeptide: RNA-directed RNA polymerase (1088 aa).

Positions 501-687 (LSYGDVTRFL…AKRYLAGGKI (187 aa)) constitute a RdRp catalytic domain.

This sequence belongs to the reoviridae RNA-directed RNA polymerase family. As to quaternary structure, interacts with VP3 (Potential). Interacts with VP2; this interaction activates VP1. Interacts with NSP5; this interaction is probably necessary for the formation of functional virus factories. Interacts with NSP2; this interaction is weak. The cofactor is Mg(2+).

The protein resides in the virion. The enzyme catalyses RNA(n) + a ribonucleoside 5'-triphosphate = RNA(n+1) + diphosphate. Functionally, RNA-directed RNA polymerase that is involved in both transcription and genome replication. Together with VP3 capping enzyme, forms an enzyme complex positioned near the channels situated at each of the five-fold vertices of the core. Following infection, the outermost layer of the virus is lost, leaving a double-layered particle (DLP) made up of the core and VP6 shell. VP1 then catalyzes the transcription of fully conservative plus-strand genomic RNAs that are extruded through the DLP's channels into the cytoplasm where they function as mRNAs for translation of viral proteins. One copy of each of the viral (+)RNAs is also recruited during core assembly, together with newly synthesized polymerase complexes and VP2. The polymerase of these novo-formed particles catalyzes the synthesis of complementary minus-strands leading to dsRNA formation. To do so, the polymerase specifically recognizes and binds 4 bases 5'-UGUG-3' in the conserved 3'-sequence of plus-strand RNA templates. VP2 presumably activates the autoinhibited VP1-RNA complex to coordinate packaging and genome replication. Once dsRNA synthesis is complete, the polymerase switches to the transcriptional mode, thus providing secondary transcription. This Rotavirus A (strain RVA/Human/Japan/KU/1995/G1P1A[8]) (RV-A) protein is RNA-directed RNA polymerase.